Here is a 607-residue protein sequence, read N- to C-terminus: Acyl-coenzyme A thioesterase 11 (607 aa).

Residues 1–13 (MIQNVGNHLRRGL) constitute a mitochondrion transit peptide. Phosphoserine is present on residues serine 15 and serine 25. One can recognise a HotDog ACOT-type 1 domain in the interval 43–155 (NPTEVQMSQL…LATFVARREI (113 aa)). Residues 91 to 93 (TAS), 120 to 122 (NSS), arginine 181, and 271 to 273 (HFR) contribute to the CoA site. The region spanning 216-329 (EKTRVESVEL…FMTFVVLDAD (114 aa)) is the HotDog ACOT-type 2 domain. The START domain occupies 375–585 (LSVPWDPSNQ…GWNGKLAGGH (211 aa)).

As to expression, isoform 1 is predominantly expressed in skeletal muscle, liver, testis, stomach, spleen, lung and brain. Isoform 2 is predominantly expressed in kidney, uterus, hibernoma and white adipose tissue.

It localises to the mitochondrion matrix. Its subcellular location is the cytoplasm. It catalyses the reaction hexadecanoyl-CoA + H2O = hexadecanoate + CoA + H(+). The catalysed reaction is tetradecanoyl-CoA + H2O = tetradecanoate + CoA + H(+). The enzyme catalyses dodecanoyl-CoA + H2O = dodecanoate + CoA + H(+). It carries out the reaction butanoyl-CoA + H2O = butanoate + CoA + H(+). Its pathway is lipid metabolism; fatty acid metabolism. Has an acyl-CoA thioesterase activity with a preference for the long chain fatty acyl-CoA thioesters hexadecanoyl-CoA/palmitoyl-CoA and tetradecanoyl-CoA/myristoyl-CoA which are the main substrates in the mitochondrial beta-oxidation pathway. The sequence is that of Acyl-coenzyme A thioesterase 11 (ACOT11) from Homo sapiens (Human).